The following is a 242-amino-acid chain: HTH-type transcriptional regulator GadW (242 aa).

In terms of domain architecture, HTH araC/xylS-type spans 139-236 (GKVERLISFD…GVTPHQFSQH (98 aa)). 2 consecutive DNA-binding regions (H-T-H motif) follow at residues 156–177 (RDIAERMYTSESLIKKKLQDEN) and 203–226 (LHTIAEKCGYSSTSYFINTFRQYY).

Homodimer.

Functionally, depending on the conditions (growth phase and medium), acts as a positive or negative regulator of gadA and gadBC. Repression occurs directly or via the repression of the expression of gadX. Activation occurs directly by the binding of GadW to the gadA and gadBC promoters. This Escherichia coli O6:H1 (strain CFT073 / ATCC 700928 / UPEC) protein is HTH-type transcriptional regulator GadW (gadW).